The primary structure comprises 215 residues: Probable peptidyl-prolyl cis-trans isomerase (215 aa).

One can recognise a PPIase cyclophilin-type domain in the interval 38 to 197; it reads DGIYAVMETN…RRGAAAKRFV (160 aa).

Belongs to the cyclophilin-type PPIase family.

The enzyme catalyses [protein]-peptidylproline (omega=180) = [protein]-peptidylproline (omega=0). Functionally, PPIases accelerate the folding of proteins. It catalyzes the cis-trans isomerization of proline imidic peptide bonds in oligopeptides. The polypeptide is Probable peptidyl-prolyl cis-trans isomerase (ppiB) (Treponema pallidum (strain Nichols)).